The chain runs to 1197 residues: SRC kinase signaling inhibitor 1 (1197 aa).

Over residues 19 to 45 (AEGRARSPREEVGPRDPGGRGEPDPER) the composition is skewed to basic and acidic residues. The disordered stretch occupies residues 19–80 (AEGRARSPRE…GGSGGRRFSN (62 aa)). Residues Ser47 and Ser52 each carry the phosphoserine modification. Residues 65–75 (LGGGGSGGSGG) are compositionally biased toward gly residues. Ser79 carries the post-translational modification Phosphoserine. Residue Thr86 is modified to Phosphothreonine. 7 positions are modified to phosphoserine: Ser87, Ser98, Ser178, Ser200, Ser204, Ser214, and Ser260. Residue Tyr276 is modified to Phosphotyrosine. The interval 319–415 (ASRESSPTRR…RRDVKPDEDL (97 aa)) is disordered. Polar residues predominate over residues 321-331 (RESSPTRRLNN). Residues 332–341 (LSPASHLASS) are compositionally biased toward low complexity. A phosphoserine mark is found at Ser333, Ser342, and Ser359. A compositionally biased stretch (low complexity) spans 348 to 366 (PSGLPSGLPSGSPSRSRLS). Residues Arg364 and Arg371 each carry the omega-N-methylarginine modification. A phosphoserine mark is found at Ser378, Ser397, and Ser399. Residues 391–400 (PTSQGVSPSP) are compositionally biased toward polar residues. Positions 404 to 415 (LERRDVKPDEDL) are enriched in basic and acidic residues. Phosphotyrosine is present on Tyr431. Residues 501 to 676 (GFRLPPSSPQ…AVSSTPAGQP (176 aa)) form a disordered region. Pro residues predominate over residues 520–531 (GGPPPPHSPYSG). A phosphoserine mark is found at Ser527, Ser530, and Ser534. The residue at position 535 (Arg535) is an Omega-N-methylarginine. Phosphoserine is present on residues Ser537, Ser547, Ser549, Ser551, and Ser556. Residues 595–607 (KDTETRERMEAME) show a composition bias toward basic and acidic residues. Ser631 and Ser655 each carry phosphoserine. Phosphothreonine is present on residues Thr658 and Thr671. An interaction with SNAP25 region spans residues 681–731 (RLQMQMHLRGLQNSASDLRGQLQQLRKLQLQNQESVRALLKRTEAELSMRV). 2 coiled-coil regions span residues 688 to 708 (LRGL…LRKL) and 760 to 780 (EELI…IQRD). Ser878 and Ser900 each carry phosphoserine. Disordered regions lie at residues 891 to 949 (GLDF…ERDW) and 983 to 1065 (DCAS…VVTS). Position 918 is a phosphothreonine (Thr918). Position 1021 is a phosphoserine (Ser1021). The segment covering 1036 to 1045 (KSPPPPPPRR) has biased composition (pro residues). 2 positions are modified to phosphoserine: Ser1077 and Ser1094. The interval 1141-1163 (SRLKAAQGPAGSPDKGKHGKQRT) is disordered.

The protein belongs to the SRCIN1 family. In terms of assembly, interacts with BCAR1/p130Cas through its C-terminal domain and with CSK, CTTN and SRC. Also interacts with MAPRE3/EB3, SORBS3/vinexin and the N-terminal coiled-coil region of SNAP25. Tyrosine-phosphorylated in response to EGF and to cell adhesion to integrin ligands. As to expression, expressed exclusively in brain. Abundant in telencephalon and expressed moderately in cerebellum, hypothalamus, thalamus, superior and inferior colliculi, and olfactory bulb. No expression detected in medulla oblongata, spinal cord or pituitary gland. Enriched in the neuropil rather than soma in the thalamus, corpus striatum and cerebral cortex. Detected in astrocytes.

The protein resides in the cytoplasm. It localises to the cytoskeleton. It is found in the cell projection. The protein localises to the axon. Its subcellular location is the dendrite. The protein resides in the presynapse. It localises to the postsynapse. It is found in the postsynaptic density. In terms of biological role, acts as a negative regulator of SRC by activating CSK which inhibits SRC activity and downstream signaling, leading to impaired cell spreading and migration. Regulates dendritic spine morphology. Involved in calcium-dependent exocytosis. May play a role in neurotransmitter release or synapse maintenance. The chain is SRC kinase signaling inhibitor 1 from Rattus norvegicus (Rat).